The primary structure comprises 1013 residues: MDIS1-interacting receptor like kinase 1 (1013 aa).

The signal sequence occupies residues 1-23; the sequence is MKMKIIVLFLYYCYIGSTSSVLA. Topologically, residues 24-633 are extracellular; it reads SIDNVNELSV…SSHSSLHGKR (610 aa). N-linked (GlcNAc...) asparagine glycosylation is found at Asn61, Asn82, Asn101, Asn137, Asn146, Asn151, and Asn155. 22 LRR repeats span residues 70 to 94, 95 to 117, 119 to 137, 139 to 163, 164 to 186, 187 to 213, 215 to 234, 235 to 259, 260 to 283, 284 to 307, 308 to 331, 333 to 355, 357 to 379, 381 to 403, 405 to 426, 427 to 451, 453 to 475, 477 to 498, 499 to 523, 525 to 547, 548 to 571, and 573 to 595; these read NGNVEKLDLAGMNLTGKISDSISQL, SSLVSFNISCNGFESLLPKSIPP, KSIDISQNSFSGSLFLFSN, SLGLVHLNASGNNLSGNLTEDLGNL, VSLEVLDLRGNFFQGSLPSSFKN, LQKLRFLGLSGNNLTGELPSVLGQLPS, ETAILGYNEFKGPIPPEFGN, INSLKYLDLAIGKLSGEIPSELGKL, KSLETLLLYENNFTGTIPREIGSI, TTLKVLDFSDNALTGEIPMEITKL, KNLQLLNLMRNKLSGSIPPAISSL, QLQVLELWNNTLSGELPSDLGKN, PLQWLDVSSNSFSGEIPSTLCNK, NLTKLILFNNTFTGQIPATLSTC, SLVRVRMQNNLLNGSIPIGFGK, LEKLQRLELAGNRLSGGIPGDISDS, SLSFIDFSRNQIRSSLPSTILSI, NLQAFLVADNFISGEVPDQFQD, CPSLSNLDLSSNTLTGTIPSSIASC, KLVSLNLRNNNLTGEIPRQITTM, SALAVLDLSNNSLTGVLPESIGTS, and ALELLNVSYNKLTGPVPINGFLK. The N-linked (GlcNAc...) asparagine glycan is linked to Asn199. Asn271 is a glycosylation site (N-linked (GlcNAc...) asparagine). Asn341 carries an N-linked (GlcNAc...) asparagine glycan. N-linked (GlcNAc...) asparagine glycosylation is found at Asn381, Asn389, and Asn417. Residues Asn535, Asn557, and Asn578 are each glycosylated (N-linked (GlcNAc...) asparagine). Residues 634–654 form a helical membrane-spanning segment; sequence IVAGWLIGIASVLALGILTIV. Residues 655-1013 lie on the Cytoplasmic side of the membrane; that stretch reads TRTLYKKWYS…FSTSPVNGLL (359 aa). Thr691 carries the phosphothreonine modification. Positions 699–983 constitute a Protein kinase domain; the sequence is IKESNMIGMG…SMLGEAKPRR (285 aa). ATP is bound by residues 705-713 and Lys728; that span reads IGMGATGIV. Residue Thr710 is modified to Phosphothreonine; by autocatalysis. Thr741 and Thr742 each carry phosphothreonine; by autocatalysis. Residues Tyr777 and Tyr818 each carry the phosphotyrosine modification. Asp831 serves as the catalytic Proton acceptor. The residue at position 862 (Thr862) is a Phosphothreonine; by autocatalysis. Position 864 is a phosphoserine; by autocatalysis (Ser864). Tyr872 is subject to Phosphotyrosine. Tyr879 carries the phosphotyrosine; by autocatalysis modification. Phosphothreonine; by autocatalysis is present on residues Thr880 and Thr992. The disordered stretch occupies residues 976–1013; that stretch reads LGEAKPRRKSNSNEENTSRSLAEKHSSVFSTSPVNGLL. Polar residues predominate over residues 1002–1013; sequence SVFSTSPVNGLL.

It belongs to the protein kinase superfamily. Ser/Thr protein kinase family. In terms of assembly, homodimer. Interacts with MDIS1 and LURE1.2. Autophosphorylation induced by the interaction with LURE1.2. In terms of tissue distribution, expressed in pollen tubes.

The protein resides in the cell membrane. The catalysed reaction is L-seryl-[protein] + ATP = O-phospho-L-seryl-[protein] + ADP + H(+). It catalyses the reaction L-threonyl-[protein] + ATP = O-phospho-L-threonyl-[protein] + ADP + H(+). Its function is as follows. Involved in the regulation of procambium maintenance and polarity during vascular-tissue development. Involved in the pollen tube perception of the female signal. Phosphorylates MDSI1. This chain is MDIS1-interacting receptor like kinase 1, found in Arabidopsis thaliana (Mouse-ear cress).